A 115-amino-acid chain; its full sequence is Con-Ins G1a (115 aa).

Positions 1 to 24 (MTTSSYFLLMALGLLLYVCQSSFG) are cleaved as a signal peptide. Positions 25-29 (NQHTR) are excised as a propeptide. Proline 34 carries the 4-hydroxyproline; partial modification. 3 cysteine pairs are disulfide-bonded: cysteine 38/cysteine 101, cysteine 50/cysteine 114, and cysteine 100/cysteine 105. 4-carboxyglutamate is present on glutamate 41. The propeptide at 53–94 (KRNDAGEKRGRASPLWQRRGSLSKLKARAKRNGAFHLPRDGR) is c peptide. At glutamate 98 the chain carries 4-carboxyglutamate. At proline 104 the chain carries 4-hydroxyproline; partial. Position 109 is a 4-carboxyglutamate; partial (glutamate 109). Residue cysteine 114 is modified to Cysteine amide.

This sequence belongs to the insulin family. In terms of assembly, heterodimer of A and B chains; disulfide-linked. As to expression, expressed by the venom gland.

It is found in the secreted. In terms of biological role, this venom insulin, from a fish-hunting cone snail, facilitates prey capture by rapidly inducing hypoglycemic shock. It is one of the smallest known insulin found in nature and lacks the C-terminal segment of the B chain that, in human insulin, mediates engagement of the insulin receptor (INSR) and assembly of the hormone's hexameric storage form. Despite lacking this segment, it both binds and activates human insulin receptor (long isoform (HIR-B)) with a high potency (EC(50)=16.28 nM). In vivo, intraperitoneal injection of this peptide into zebrafish lowers blood glucose with the same potency than human insulin. In addition, when applied to water, this peptide reduces overall locomotor activity of zebrafish larvae, observed as a significant decrease in the percentage of time spent swimming and movement frequency. When tested on a mouse model of diabetes, this insulin also lowers blood glucose with a 10-fold lower potency than human insulin. This is Con-Ins G1a from Conus geographus (Geography cone).